Consider the following 331-residue polypeptide: Inactive serine/threonine-protein kinase BKN1 (331 aa).

Glycine 2 carries the N-myristoyl glycine lipid modification. Cysteine 4 is lipidated: S-palmitoyl cysteine. A Protein kinase domain is found at 58–328 (DYSVRKFYKG…VLDGLNHIAE (271 aa)).

It belongs to the protein kinase superfamily. Ser/Thr protein kinase family. As to expression, restricted to stigma in flowers.

The protein localises to the cell membrane. Its subcellular location is the nucleus. Its function is as follows. Collaboratively with BKN2/SZE2, involved in compatible pollen-stigma interactions. This Arabidopsis thaliana (Mouse-ear cress) protein is Inactive serine/threonine-protein kinase BKN1.